Consider the following 410-residue polypeptide: Putative ribonuclease E (410 aa).

Residues 39–119 (SNIYKGKIVR…GTKGALLTTF (81 aa)) form the S1 motif domain. Positions 303 and 346 each coordinate Mg(2+).

Belongs to the RNase E/G family. RNase E subfamily. Component of the RNA degradosome, which is a multiprotein complex involved in RNA processing and mRNA degradation. Within the RNA degradosome, RNase E assembles into a homotetramer formed by a dimer of dimers. Requires Mg(2+) as cofactor.

The protein localises to the cytoplasm. It localises to the cell inner membrane. It catalyses the reaction Endonucleolytic cleavage of single-stranded RNA in A- and U-rich regions.. Its function is as follows. Endoribonuclease that plays a central role in RNA processing and decay. Required for the maturation of 5S and 16S rRNAs and the majority of tRNAs. Also involved in the degradation of most mRNAs. This is Putative ribonuclease E (rne) from Buchnera aphidicola subsp. Baizongia pistaciae (strain Bp).